The primary structure comprises 296 residues: Biliverdin reductase A (296 aa).

Residues 1 to 2 constitute a propeptide that is removed on maturation; it reads MN. Residues 16–19, 44–46, 77–80, and Y98 contribute to the NADP(+) site; these read VGRA, SRR, and SSSH. T174 carries the phosphothreonine modification. Residues S178 and S230 each carry the phosphoserine modification. Residues K248 and K253 each carry the N6-acetyllysine modification. Zn(2+) contacts are provided by H280, C281, C292, and C293.

Belongs to the Gfo/Idh/MocA family. Biliverdin reductase subfamily. Monomer. Requires Zn(2+) as cofactor. Liver.

The protein resides in the cytoplasm. It is found in the cytosol. The enzyme catalyses (4Z,15Z)-bilirubin IXalpha + NAD(+) = biliverdin IXalpha + NADH + H(+). It catalyses the reaction (4Z,15Z)-bilirubin IXalpha + NADP(+) = biliverdin IXalpha + NADPH + H(+). It participates in porphyrin-containing compound metabolism; protoheme degradation. In terms of biological role, reduces the gamma-methene bridge of the open tetrapyrrole, biliverdin IXalpha, to bilirubin with the concomitant oxidation of a NADH or NADPH cofactor. Does not reduce bilirubin IXbeta. Uses the reactants NADH or NADPH depending on the pH; NADH is used at the acidic pH range (6-6.9) and NADPH at the alkaline range (8.5-8.7). NADPH, however, is the probable reactant in biological systems. The protein is Biliverdin reductase A of Homo sapiens (Human).